We begin with the raw amino-acid sequence, 408 residues long: Phosphatidylinositol transfer protein CSR1 (408 aa).

At Ser2 the chain carries N-acetylserine. Position 2 is a phosphoserine (Ser2). A CRAL-TRIO domain is found at 157–317 (ETGVIKNLEL…YLGGENDNDL (161 aa)).

It belongs to the PITP family. Forms a complex with 2 TSA2 subunits. Binds phosphatidylinositol (PtdIns).

The protein resides in the cytoplasm. The protein localises to the microsome. It is found in the endosome. The enzyme catalyses a 1,2-diacyl-sn-glycero-3-phospho-(1D-myo-inositol)(in) = a 1,2-diacyl-sn-glycero-3-phospho-(1D-myo-inositol)(out). Its function is as follows. Non-classical phosphatidylinositol (PtdIns) transfer protein (PITP), which exhibits PtdIns-binding/transfer activity in the absence of detectable PtdCho-binding/transfer activity. Activates SPO14/PLD1 (phospholipase D1) by stimulating phosphoinositide synthesis via the STT4 PtdIns 4-kinase. Modulates ArfGAP function through effects on SPO14 activity. Inhibits phosphatidylcholine degradation by PLB1 (phospholipase B1). May also regulate post-Golgi membrane-trafficking events and have a role resistance to oxidative stress. Inhibits fatty acid synthase activity in response to heme depletion and oleic acid starvation, preventing saturated fatty acid (SFA) accumulation. The protein is Phosphatidylinositol transfer protein CSR1 (CSR1) of Saccharomyces cerevisiae (strain ATCC 204508 / S288c) (Baker's yeast).